The sequence spans 567 residues: MEGSPIPVLTVPTAPYEDQRPTGGGGLRRPTGLFEGQRNYLPNFIQSVLSSIDLRDRQGCTMVVGSDGRYFSRTATEIVVQMAAANGIGRLIIGQNGILSTPAVSCIIRKIKAAGGIILTASHCPGGPGGEFGVKFNVANGGPAPDVVSDKIYQISKTIEEYTICPDLRIDLSRLGRQEFDLENKFKPFRVEIVDPVDIYLNLLRTIFDFNAIKSLLTGPSQLKIRVDAMHGVMGPYVRKVLCDELGAPANSAINCVPLEDFGGQHPDPNLTYATTLLEAMKGGEYGFGAAFDADGDRYMILGQNGFFVSPSDSLAIIAANLSCIPYFRQMGVRGFGRSMPTSMALDRVAKSMKVPVYETPAGWRFFSNLMDSGRCSLCGEESFGTGSDHLREKDGLWAVLVWLSIIAARKQSVEEIVRDHWAKYGRHYYCRVLYEAKSPKATYYIMRDLEALVTDKSFIGQQFAVGSHIYSIAKTDSFEYVDPVDGTVTKKQGLRIIFSDASRLIFRLSSSSGVRATIRLYAESYERDPSGHDQEPQAVLSPLIAIALKISQIHERTGRRGPTVIT.

Residues 1–26 are disordered; it reads MEGSPIPVLTVPTAPYEDQRPTGGGG. The residue at position 120 (Thr-120) is a Phosphothreonine. Ser-122 carries the phosphoserine modification.

This sequence belongs to the phosphohexose mutase family. Interacts with DMD/dystrophin; the interaction is direct. Interacts with UTRN/utrophin.

The protein localises to the cell junction. The protein resides in the adherens junction. It localises to the cytoplasm. It is found in the cytoskeleton. Its subcellular location is the cell membrane. The protein localises to the sarcolemma. Its function is as follows. Component of adherens-type cell-cell and cell-matrix junctions. Has no phosphoglucomutase activity in vitro. The chain is Phosphoglucomutase-like protein 5 from Rattus norvegicus (Rat).